The following is a 557-amino-acid chain: Formate--tetrahydrofolate ligase (557 aa).

67-74 (TPAGEGKS) is a binding site for ATP.

It belongs to the formate--tetrahydrofolate ligase family.

It catalyses the reaction (6S)-5,6,7,8-tetrahydrofolate + formate + ATP = (6R)-10-formyltetrahydrofolate + ADP + phosphate. It participates in one-carbon metabolism; tetrahydrofolate interconversion. The protein is Formate--tetrahydrofolate ligase of Latilactobacillus sakei subsp. sakei (strain 23K) (Lactobacillus sakei subsp. sakei).